The sequence spans 165 residues: Nucleotide-binding protein LBF_1338 (165 aa).

This sequence belongs to the YajQ family.

Nucleotide-binding protein. In Leptospira biflexa serovar Patoc (strain Patoc 1 / Ames), this protein is Nucleotide-binding protein LBF_1338.